Reading from the N-terminus, the 887-residue chain is Ubiquitin carboxyl-terminal hydrolase 4 (887 aa).

The 127-residue stretch at 202 to 328 folds into the Rhodanese domain; sequence KEDSLLLIDV…WIKNGGEIDK (127 aa). Disordered stretches follow at residues 358–465 and 484–505; these read AFPD…PKPP and QKQN…TLIR. Polar residues predominate over residues 387–402; the sequence is TPPNGSSTLGRINSPV. The USP domain occupies 525–885; sequence VGLENMGNSC…SAYVLFYHRI (361 aa). The Nucleophile role is filled by Cys-534. His-842 serves as the catalytic Proton acceptor.

It belongs to the peptidase C19 family.

It is found in the cytoplasm. The protein localises to the late endosome membrane. It catalyses the reaction Thiol-dependent hydrolysis of ester, thioester, amide, peptide and isopeptide bonds formed by the C-terminal Gly of ubiquitin (a 76-residue protein attached to proteins as an intracellular targeting signal).. RFU1 is an inhibitor of deubiquitination activity. Ubiquitin thioesterase that acts at the late endosome/prevacuolar compartment to recover ubiquitin from ubiquitinated membrane proteins en route to the vacuole. Also removes ubiquitin from soluble proteins targeted to proteasomes. Is essential to maintain a normal level of free ubiquitin. Required for promoting coordination of DNA replication and avoids DNA overreplication. This chain is Ubiquitin carboxyl-terminal hydrolase 4 (DOA4), found in Candida glabrata (strain ATCC 2001 / BCRC 20586 / JCM 3761 / NBRC 0622 / NRRL Y-65 / CBS 138) (Yeast).